Here is a 570-residue protein sequence, read N- to C-terminus: Grayanic acid biosynthesis cluster cytochrome P450 monooxygenase (570 aa).

A helical membrane pass occupies residues Ile-9–Ile-29. Asn-191 carries N-linked (GlcNAc...) asparagine glycosylation. Residue Cys-510 coordinates heme.

It belongs to the cytochrome P450 family. It depends on heme as a cofactor.

The protein localises to the membrane. The protein operates within secondary metabolite biosynthesis. Non-reducing polyketide synthase; part of the gene cluster that mediates the biosynthesis of orcinol depsidone grayanic acid (GRA), the only major secondary metabolite known in C.grayi. The first step consists in the ring and depside synthesis by PKS16 leading to 4-O-demethylsphaerophorin, involving different orcinol-like rings, one with acetyl CoA and the other with octanoyl CoA as the starter. Further depsidone formation by the GRA cluster-specific cytochrome P450 leads to 4-O-demethylgrayanic acid. Finally, the cluster specific O-methyltransferase probably converts the 4-O-demethylgrayanic acid into grayanic acid. The polypeptide is Grayanic acid biosynthesis cluster cytochrome P450 monooxygenase (Cladonia grayi (Gray's cup lichen)).